The sequence spans 248 residues: Probable transcriptional regulatory protein Atu3727 (248 aa).

Residues Met-1–Arg-21 are disordered.

Belongs to the TACO1 family.

It is found in the cytoplasm. The chain is Probable transcriptional regulatory protein Atu3727 from Agrobacterium fabrum (strain C58 / ATCC 33970) (Agrobacterium tumefaciens (strain C58)).